The primary structure comprises 542 residues: Protein MGF 505-11L (542 aa).

Belongs to the asfivirus MGF 505 family.

In terms of biological role, plays a role in virus cell tropism, and may be required for efficient virus replication in macrophages. The chain is Protein MGF 505-11L from African swine fever virus (isolate Warthog/Namibia/Wart80/1980) (ASFV).